A 310-amino-acid chain; its full sequence is Olfactory receptor 8B12 (310 aa).

The Extracellular segment spans residues 1–24; sequence MAAKNSSVTEFILEGLTHQPGLRI. A glycan (N-linked (GlcNAc...) asparagine) is linked at N5. A helical membrane pass occupies residues 25–45; sequence PLFFLFLGFYTVTVVGNLGLI. At 46 to 53 the chain is on the cytoplasmic side; that stretch reads TLIGLNSH. A helical transmembrane segment spans residues 54–74; that stretch reads LHTPMYFFLFNLSLIDFCFST. Residues 75-98 are Extracellular-facing; sequence TITPKMLMSFVSRKNIISFTGCMT. A disulfide bridge connects residues C96 and C188. A helical membrane pass occupies residues 99 to 119; it reads QLFFFCFFVVSESFILSAMAY. Residues 120–138 lie on the Cytoplasmic side of the membrane; that stretch reads DRYVAICNPLLYTVTMSCQ. The chain crosses the membrane as a helical span at residues 139 to 159; the sequence is VCLLLLLGAYGMGFAGAMAHT. At 160-196 the chain is on the extracellular side; sequence GSIMNLTFCADNLVNHFMCDILPLLELSCNSSYMNEL. Residues N164 and N189 are each glycosylated (N-linked (GlcNAc...) asparagine). A helical membrane pass occupies residues 197-216; the sequence is VVFIVVAVDVGMPIVTVFIS. Residues 217-236 are Cytoplasmic-facing; the sequence is YALILSSILHNSSTEGRSKA. Residues 237 to 257 traverse the membrane as a helical segment; that stretch reads FSTCSSHIIVVSLFFGSGAFM. Over 258 to 270 the chain is Extracellular; sequence YLKPLSILPLEQG. The helical transmembrane segment at 271–291 threads the bilayer; sequence KVSSLFYTIIVPVLNPLIYSL. The Cytoplasmic portion of the chain corresponds to 292 to 310; the sequence is RNKDVKVALRRTLGRKIFS.

It belongs to the G-protein coupled receptor 1 family.

It localises to the cell membrane. Odorant receptor. The protein is Olfactory receptor 8B12 (OR8B12) of Homo sapiens (Human).